A 496-amino-acid polypeptide reads, in one-letter code: L-arabinose isomerase (496 aa).

Residues glutamate 302, glutamate 329, histidine 346, and histidine 445 each coordinate Mn(2+).

This sequence belongs to the arabinose isomerase family. The cofactor is Mn(2+).

It catalyses the reaction beta-L-arabinopyranose = L-ribulose. Its pathway is carbohydrate degradation; L-arabinose degradation via L-ribulose; D-xylulose 5-phosphate from L-arabinose (bacterial route): step 1/3. Functionally, catalyzes the conversion of L-arabinose to L-ribulose. The sequence is that of L-arabinose isomerase from Thermotoga maritima (strain ATCC 43589 / DSM 3109 / JCM 10099 / NBRC 100826 / MSB8).